We begin with the raw amino-acid sequence, 1869 residues long: Chitin synthase csm1 (1869 aa).

One can recognise a Myosin motor domain in the interval 1–778 (MAQHRCVGGN…CWMEIAQLSD (778 aa)). 103-110 (GESGSGKT) is an ATP binding site. N-linked (GlcNAc...) asparagine glycans are attached at residues Asn-122, Asn-290, Asn-427, and Asn-558. A disordered region spans residues 579 to 653 (HPQERTTVMQ…KPSEEGASGQ (75 aa)). The span at 583–593 (RTTVMQASVSS) shows a compositional bias: polar residues. Residues 658 to 682 (LDNVTKSFHAQNTNAYFVFCLKPND) are actin-binding. The N-linked (GlcNAc...) asparagine glycan is linked to Asn-660. Transmembrane regions (helical) follow at residues 880–900 (WVFI…QHLG) and 919–939 (FIIW…PMLV). N-linked (GlcNAc...) asparagine glycans are attached at residues Asn-1029, Asn-1054, and Asn-1120. A helical membrane pass occupies residues 1191–1211 (FILAVTIILCSIIAFKFFAAL). N-linked (GlcNAc...) asparagine glycosylation is found at Asn-1448 and Asn-1554. 3 helical membrane-spanning segments follow: residues 1579 to 1599 (FIVF…AYIV), 1612 to 1632 (VPVL…IIFI), and 1639 to 1659 (MIAW…GLPL). Residues 1811-1866 (LPSDDALLAEIREILRTADLMTVTKKGVKQELERRFGVNLDSRRAYINSATEALLS) enclose the DEK-C domain.

The protein in the N-terminal section; belongs to the TRAFAC class myosin-kinesin ATPase superfamily. Myosin family. In the C-terminal section; belongs to the chitin synthase family. Class V subfamily.

The protein localises to the cell membrane. Its subcellular location is the cell septum. The protein resides in the cell tip. The enzyme catalyses [(1-&gt;4)-N-acetyl-beta-D-glucosaminyl](n) + UDP-N-acetyl-alpha-D-glucosamine = [(1-&gt;4)-N-acetyl-beta-D-glucosaminyl](n+1) + UDP + H(+). Polymerizes chitin, a structural polymer of the cell wall and septum, by transferring the sugar moiety of UDP-GlcNAc to the non-reducing end of the growing chitin polymer. Involved in mycelial growth. The polypeptide is Chitin synthase csm1 (Pyricularia grisea (Crabgrass-specific blast fungus)).